We begin with the raw amino-acid sequence, 222 residues long: Phosphoribosylformylglycinamidine synthase subunit PurQ (222 aa).

The region spanning 3 to 222 is the Glutamine amidotransferase type-1 domain; sequence SAVIQLPGLN…LFESVLGRAA (220 aa). Cysteine 86 acts as the Nucleophile in catalysis. Active-site residues include histidine 196 and glutamate 198.

As to quaternary structure, part of the FGAM synthase complex composed of 1 PurL, 1 PurQ and 2 PurS subunits.

The protein resides in the cytoplasm. The enzyme catalyses N(2)-formyl-N(1)-(5-phospho-beta-D-ribosyl)glycinamide + L-glutamine + ATP + H2O = 2-formamido-N(1)-(5-O-phospho-beta-D-ribosyl)acetamidine + L-glutamate + ADP + phosphate + H(+). The catalysed reaction is L-glutamine + H2O = L-glutamate + NH4(+). It functions in the pathway purine metabolism; IMP biosynthesis via de novo pathway; 5-amino-1-(5-phospho-D-ribosyl)imidazole from N(2)-formyl-N(1)-(5-phospho-D-ribosyl)glycinamide: step 1/2. Its function is as follows. Part of the phosphoribosylformylglycinamidine synthase complex involved in the purines biosynthetic pathway. Catalyzes the ATP-dependent conversion of formylglycinamide ribonucleotide (FGAR) and glutamine to yield formylglycinamidine ribonucleotide (FGAM) and glutamate. The FGAM synthase complex is composed of three subunits. PurQ produces an ammonia molecule by converting glutamine to glutamate. PurL transfers the ammonia molecule to FGAR to form FGAM in an ATP-dependent manner. PurS interacts with PurQ and PurL and is thought to assist in the transfer of the ammonia molecule from PurQ to PurL. This is Phosphoribosylformylglycinamidine synthase subunit PurQ from Chelativorans sp. (strain BNC1).